Consider the following 247-residue polypeptide: Hydroxyacylglutathione hydrolase 1 (247 aa).

The Zn(2+) site is built by His54, His56, Asp58, His59, His111, Asp128, and His165.

The protein belongs to the metallo-beta-lactamase superfamily. Glyoxalase II family. In terms of assembly, monomer. Zn(2+) is required as a cofactor.

The catalysed reaction is an S-(2-hydroxyacyl)glutathione + H2O = a 2-hydroxy carboxylate + glutathione + H(+). The protein operates within secondary metabolite metabolism; methylglyoxal degradation; (R)-lactate from methylglyoxal: step 2/2. In terms of biological role, thiolesterase that catalyzes the hydrolysis of S-D-lactoyl-glutathione to form glutathione and D-lactic acid. In Vibrio vulnificus (strain YJ016), this protein is Hydroxyacylglutathione hydrolase 1.